The primary structure comprises 406 residues: Sensor histidine kinase YxjM (406 aa).

The Cytoplasmic segment spans residues 1–13 (MNGQTPARHYYKK). A helical transmembrane segment spans residues 14–34 (LVPSLILILNCIQFLSHPTKA). Over 35 to 36 (DP) the chain is Extracellular. The helical transmembrane segment at 37 to 57 (ILLAFVFAVYLAFIWIIPYVA) threads the bilayer. Ser-58 is a topological domain (cytoplasmic). Helical transmembrane passes span 59 to 79 (TAVSLSIFIGLWLLTDFFWAV) and 80 to 100 (SGQEQGAAYFLIVFLMIYAAF). Residue Arg-101 is a topological domain, cytoplasmic. A helical membrane pass occupies residues 102–122 (LPSRLSLIFTACLIGGNILLL). Over 123–125 (SSQ) the chain is Extracellular. The helical transmembrane segment at 126-146 (GGSLNTIISNISIMLGLYVLF) threads the bilayer. Topologically, residues 147–406 (SSMRFRREAR…TNKEQKDEQR (260 aa)) are cytoplasmic. Residues 209-396 (DIHDSIGHEL…KIELSLPLMT (188 aa)) form the Histidine kinase domain. Residue His-211 is modified to Phosphohistidine; by autocatalysis.

The protein localises to the cell membrane. It catalyses the reaction ATP + protein L-histidine = ADP + protein N-phospho-L-histidine.. In terms of biological role, probable member of the two-component regulatory system YxjM/YxjL. May activate YxjL by phosphorylation. This Bacillus subtilis (strain 168) protein is Sensor histidine kinase YxjM (yxjM).